Here is a 153-residue protein sequence, read N- to C-terminus: NADPH-dependent 7-cyano-7-deazaguanine reductase (153 aa).

The active-site Thioimide intermediate is cysteine 51. The active-site Proton donor is the aspartate 58. Substrate-binding positions include 73-75 (LES) and 92-93 (HE).

Belongs to the GTP cyclohydrolase I family. QueF type 1 subfamily.

It is found in the cytoplasm. The enzyme catalyses 7-aminomethyl-7-carbaguanine + 2 NADP(+) = 7-cyano-7-deazaguanine + 2 NADPH + 3 H(+). It functions in the pathway tRNA modification; tRNA-queuosine biosynthesis. Its function is as follows. Catalyzes the NADPH-dependent reduction of 7-cyano-7-deazaguanine (preQ0) to 7-aminomethyl-7-deazaguanine (preQ1). This Bradyrhizobium diazoefficiens (strain JCM 10833 / BCRC 13528 / IAM 13628 / NBRC 14792 / USDA 110) protein is NADPH-dependent 7-cyano-7-deazaguanine reductase.